The primary structure comprises 539 residues: MAAKDVKFGNDARVKMLRGVNVLADAVKVTLGPKGRNVVLDKSFGAPTITKDGVSVAREIELEDKFENMGAQMVKEVASKANDAAGDGTTTATVLAQSIIAEGLKAVAAGMNPMDLKRGIDKAVVAAVEELKALSVPCSDSKAIAQVGTISANSDETVGKLIAEAMDKVGKEGVITVEDGTGLEDELDVVEGMQFDRGYLSPYFINKPETGAVELESPFILLADKKISNIREMLPVLEAVAKAGKPLLIIAEDVEGEALATLVVNTMRGIVKVAAVKAPGFGDRRKAMLQDIATLTGGTVISEEIGMELEKATLEDMGQAKRVVINKDTTTIIDGVGEEAAIQGRVAQIRKQIEEATSDYDREKLQERVAKLAGGVAVIKVGAATEVEMKEKKARVDDALHATRAAVEEGVVAGGGVALIRVASKLSNLRGQNEDQNVGIKVALRAMEAPLRQIVLNCGEEPSVVANTVKAGDGNYGYNAATEEYGNMIDMGILDPTKVTRSALQYAASVAGLMITTECMVTDLPKGDAPDLRAAGMGG.

ATP-binding positions include 30–33, lysine 51, 87–91, glycine 415, 479–481, and aspartate 495; these read TLGP, DGTTT, and NAA.

Belongs to the chaperonin (HSP60) family. Forms a cylinder of 14 subunits composed of two heptameric rings stacked back-to-back. Interacts with the co-chaperonin GroES.

The protein resides in the cytoplasm. It catalyses the reaction ATP + H2O + a folded polypeptide = ADP + phosphate + an unfolded polypeptide.. In terms of biological role, together with its co-chaperonin GroES, plays an essential role in assisting protein folding. The GroEL-GroES system forms a nano-cage that allows encapsulation of the non-native substrate proteins and provides a physical environment optimized to promote and accelerate protein folding. The polypeptide is Chaperonin GroEL (Kluyvera intermedia (Enterobacter intermedius)).